We begin with the raw amino-acid sequence, 219 residues long: ATP-dependent dethiobiotin synthetase BioD (219 aa).

ATP is bound at residue 12–17 (DLGKTH). Position 16 (T16) interacts with Mg(2+). K37 is a catalytic residue. S41 is a binding site for substrate. ATP contacts are provided by residues D52, 115 to 118 (EGAG), and 175 to 176 (SE). Positions 52 and 115 each coordinate Mg(2+).

It belongs to the dethiobiotin synthetase family. Homodimer. The cofactor is Mg(2+).

It is found in the cytoplasm. The catalysed reaction is (7R,8S)-7,8-diammoniononanoate + CO2 + ATP = (4R,5S)-dethiobiotin + ADP + phosphate + 3 H(+). Its pathway is cofactor biosynthesis; biotin biosynthesis; biotin from 7,8-diaminononanoate: step 1/2. Catalyzes a mechanistically unusual reaction, the ATP-dependent insertion of CO2 between the N7 and N8 nitrogen atoms of 7,8-diaminopelargonic acid (DAPA, also called 7,8-diammoniononanoate) to form a ureido ring. The chain is ATP-dependent dethiobiotin synthetase BioD from Caulobacter vibrioides (strain ATCC 19089 / CIP 103742 / CB 15) (Caulobacter crescentus).